The following is an 80-amino-acid chain: MNKNPIYRSEEEAKNIACGNVAAELDENSQALDAINGAGWKQTIACTIAQGTLGCLVSYGLGNGGYCCTYTVECSKTCNK.

A propeptide spans 1-38 (MNKNPIYRSEEEAKNIACGNVAAELDENSQALDAINGA) (cleaved by FlvT). 2,3-didehydrobutyrine; by FlvM1 is present on residues Thr-43 and Thr-47. Positions 52 to 55 (TLGC) form a cross-link, beta-methyllanthionine (Thr-Cys); by FlvM1. Positions 58–68 (SYGLGNGGYCC) form a cross-link, lanthionine (Ser-Cys); by FlvM1. Cross-links (beta-methyllanthionine (Thr-Cys); by FlvM1) lie at residues 69–74 (TYTVEC) and 71–78 (TVECSKTC).

Post-translationally, the lanthionine formed by Ser-58 and Cys-68 forms a putative lipid II binding motif. In terms of processing, maturation of FlvA1 peptides involves the enzymatic conversion of Thr, and Ser into dehydrated AA and the formation of thioether bonds with cysteines. Modifications are processed by the flavecin synthetase FlvM1. This is followed by membrane translocation and cleavage of the modified precursor. Contains DL-lanthionine and DL-beta-methyllanthionine, when coepressed in E.coli with the flavecin synthetase FlvM1.

Its subcellular location is the secreted. Its function is as follows. Lanthionine-containing peptide antibiotic (lantibiotic) only active on Gram-positive bacteria in synergy with Flvbeta peptides, which are encoded by the same operon than Flvalpha.a. Shows antibacterial activity in synergy with Flvbeta.b, Flvbeta.c, Flvbeta.e and Flvbeta.g. Does not show antibacterial activity when tested with Flvbeta.a, Flvbeta.d, Flvbeta.f and Flvbeta.h. The bactericidal activity of lantibiotics is based on depolarization of energized bacterial cytoplasmic membranes, initiated by the formation of aqueous transmembrane pores. This Ruminococcus flavefaciens protein is Lantibiotic Flvalpha.c.